A 289-amino-acid polypeptide reads, in one-letter code: S-methyl-5'-thioadenosine phosphorylase (289 aa).

Phosphate-binding positions include S11, 53–54, and 86–87; these read RH and SA. M187 is a substrate binding site. Residue T188 coordinates phosphate. 211-213 is a binding site for substrate; sequence DYD.

It belongs to the PNP/MTAP phosphorylase family. MTAP subfamily. As to quaternary structure, homohexamer. Dimer of a homotrimer.

It catalyses the reaction S-methyl-5'-thioadenosine + phosphate = 5-(methylsulfanyl)-alpha-D-ribose 1-phosphate + adenine. It functions in the pathway amino-acid biosynthesis; L-methionine biosynthesis via salvage pathway; S-methyl-5-thio-alpha-D-ribose 1-phosphate from S-methyl-5'-thioadenosine (phosphorylase route): step 1/1. Its function is as follows. Catalyzes the reversible phosphorylation of S-methyl-5'-thioadenosine (MTA) to adenine and 5-methylthioribose-1-phosphate. Involved in the breakdown of MTA, a major by-product of polyamine biosynthesis. Responsible for the first step in the methionine salvage pathway after MTA has been generated from S-adenosylmethionine. Has broad substrate specificity with 6-aminopurine nucleosides as preferred substrates. This chain is S-methyl-5'-thioadenosine phosphorylase, found in Thermosynechococcus vestitus (strain NIES-2133 / IAM M-273 / BP-1).